The chain runs to 341 residues: UDP-N-acetyl-alpha-D-glucosaminouronate 4-epimerase (341 aa).

F27, I28, D47, A50, T51, G52, D78, I79, and Q98 together coordinate NAD(+). S103 provides a ligand contact to UDP-N-acetyl-alpha-D-galactosamine. Residue T117 participates in NAD(+) binding. Positions 142, 143, and 166 each coordinate UDP-N-acetyl-alpha-D-galactosamine. The NAD(+) site is built by Y166 and K170. Residue Y166 is the Proton acceptor of the active site. N195 lines the UDP-N-acetyl-alpha-D-galactosamine pocket. V196 provides a ligand contact to NAD(+). UDP-N-acetyl-alpha-D-galactosamine is bound by residues V210, Y225, N227, R234, R299, and D302.

This sequence belongs to the NAD(P)-dependent epimerase/dehydratase family. As to quaternary structure, homodimer. It depends on NAD(+) as a cofactor.

It carries out the reaction UDP-2-acetamido-2-deoxy-alpha-D-glucuronate = UDP-2-acetamido-2-deoxy-alpha-D-galacturonate. The enzyme catalyses UDP-N-acetyl-alpha-D-glucosamine = UDP-N-acetyl-alpha-D-galactosamine. It functions in the pathway bacterial outer membrane biogenesis; LPS O-antigen biosynthesis. Epimerase required for the biosynthesis of the B-band O antigen of serotype O6 lipopolysaccharide. Catalyzes the reversible epimerization of UDP-N-acetylglucosaminuronic acid (UDP-GlcNAcA) to UDP-N-acetylgalactosaminuronic acid (UDP-GalNAcA). Also catalyzes the reversible epimerization of UDP-N-acetylglucosamine (UDP-GlcNAc) to UDP-N-acetylgalactosamine (UDP-GalNAc). Has very low epimerase activity with UDP-glucose (UDP-Glc) and UDP-galactose (UDP-Gal). This chain is UDP-N-acetyl-alpha-D-glucosaminouronate 4-epimerase, found in Pseudomonas aeruginosa.